Consider the following 399-residue polypeptide: Phosphoglycerate kinase (399 aa).

Substrate contacts are provided by residues 22-24, Arg-38, 61-64, Arg-120, and Arg-153; these read DFN and HLGR. Residues Lys-204, Glu-326, and 352–355 contribute to the ATP site; that span reads GGDT.

It belongs to the phosphoglycerate kinase family. In terms of assembly, monomer.

Its subcellular location is the cytoplasm. The enzyme catalyses (2R)-3-phosphoglycerate + ATP = (2R)-3-phospho-glyceroyl phosphate + ADP. It functions in the pathway carbohydrate degradation; glycolysis; pyruvate from D-glyceraldehyde 3-phosphate: step 2/5. The sequence is that of Phosphoglycerate kinase from Pelobacter propionicus (strain DSM 2379 / NBRC 103807 / OttBd1).